A 480-amino-acid chain; its full sequence is Aspartyl/glutamyl-tRNA(Asn/Gln) amidotransferase subunit B (480 aa).

Belongs to the GatB/GatE family. GatB subfamily. As to quaternary structure, heterotrimer of A, B and C subunits.

The enzyme catalyses L-glutamyl-tRNA(Gln) + L-glutamine + ATP + H2O = L-glutaminyl-tRNA(Gln) + L-glutamate + ADP + phosphate + H(+). It carries out the reaction L-aspartyl-tRNA(Asn) + L-glutamine + ATP + H2O = L-asparaginyl-tRNA(Asn) + L-glutamate + ADP + phosphate + 2 H(+). Allows the formation of correctly charged Asn-tRNA(Asn) or Gln-tRNA(Gln) through the transamidation of misacylated Asp-tRNA(Asn) or Glu-tRNA(Gln) in organisms which lack either or both of asparaginyl-tRNA or glutaminyl-tRNA synthetases. The reaction takes place in the presence of glutamine and ATP through an activated phospho-Asp-tRNA(Asn) or phospho-Glu-tRNA(Gln). This is Aspartyl/glutamyl-tRNA(Asn/Gln) amidotransferase subunit B from Streptococcus pneumoniae (strain ATCC 700669 / Spain 23F-1).